A 338-amino-acid chain; its full sequence is Taste receptor type 2 member 39 (338 aa).

The Extracellular segment spans residues methionine 1 to serine 30. The chain crosses the membrane as a helical span at residues proline 31 to alanine 51. The Cytoplasmic portion of the chain corresponds to asparagine 52 to arginine 74. The helical transmembrane segment at isoleucine 75–threonine 95 threads the bilayer. Residues isoleucine 96–serine 116 are Extracellular-facing. The chain crosses the membrane as a helical span at residues phenylalanine 117–valine 137. Residues lysine 138–glycine 156 lie on the Cytoplasmic side of the membrane. Residues leucine 157–isoleucine 177 form a helical membrane-spanning segment. The Extracellular portion of the chain corresponds to asparagine 178–serine 205. N-linked (GlcNAc...) asparagine glycosylation is present at asparagine 194. The chain crosses the membrane as a helical span at residues valine 206–leucine 226. At alanine 227–lysine 262 the chain is on the cytoplasmic side. Residues alanine 263–serine 283 form a helical membrane-spanning segment. The Extracellular portion of the chain corresponds to asparagine 284–leucine 291. The helical transmembrane segment at tryptophan 292–isoleucine 312 threads the bilayer. Over lysine 313–leucine 338 the chain is Cytoplasmic.

It belongs to the G-protein coupled receptor T2R family.

It localises to the membrane. Its function is as follows. Receptor that may play a role in the perception of bitterness and is gustducin-linked. May play a role in sensing the chemical composition of the gastrointestinal content. The activity of this receptor may stimulate alpha gustducin, mediate PLC-beta-2 activation and lead to the gating of TRPM5. This Macaca mulatta (Rhesus macaque) protein is Taste receptor type 2 member 39 (TAS2R39).